The following is a 316-amino-acid chain: Acetyl-coenzyme A carboxylase carboxyl transferase subunit alpha (316 aa).

A CoA carboxyltransferase C-terminal domain is found at 39–293; that stretch reads RLQDKSHALT…RQTLLAQLES (255 aa).

It belongs to the AccA family. As to quaternary structure, acetyl-CoA carboxylase is a heterohexamer composed of biotin carboxyl carrier protein (AccB), biotin carboxylase (AccC) and two subunits each of ACCase subunit alpha (AccA) and ACCase subunit beta (AccD).

The protein localises to the cytoplasm. The catalysed reaction is N(6)-carboxybiotinyl-L-lysyl-[protein] + acetyl-CoA = N(6)-biotinyl-L-lysyl-[protein] + malonyl-CoA. It functions in the pathway lipid metabolism; malonyl-CoA biosynthesis; malonyl-CoA from acetyl-CoA: step 1/1. In terms of biological role, component of the acetyl coenzyme A carboxylase (ACC) complex. First, biotin carboxylase catalyzes the carboxylation of biotin on its carrier protein (BCCP) and then the CO(2) group is transferred by the carboxyltransferase to acetyl-CoA to form malonyl-CoA. This is Acetyl-coenzyme A carboxylase carboxyl transferase subunit alpha from Azotobacter vinelandii (strain DJ / ATCC BAA-1303).